Consider the following 1588-residue polypeptide: uncharacterized protein (1588 aa).

Residues 486 to 495 (RKRLTSKTED) show a composition bias toward basic and acidic residues. Disordered regions lie at residues 486 to 515 (RKRL…KRRP) and 1146 to 1176 (GGQD…RELN). Positions 498–507 (NQWTRDCQNS) are enriched in polar residues. The span at 1150–1169 (NVSDQSENQSENQSLESETS) shows a compositional bias: low complexity.

It localises to the virion. This is an uncharacterized protein from Acanthamoeba polyphaga (Amoeba).